A 215-amino-acid chain; its full sequence is Cytochrome c biogenesis ATP-binding export protein CcmA (215 aa).

In terms of domain architecture, ABC transporter spans 3–211; sequence LTAENLAARR…KMTGFAGVDR (209 aa). 35–42 contributes to the ATP binding site; that stretch reads GRNGSGKS.

The protein belongs to the ABC transporter superfamily. CcmA exporter (TC 3.A.1.107) family. In terms of assembly, the complex is composed of two ATP-binding proteins (CcmA) and two transmembrane proteins (CcmB).

Its subcellular location is the cell inner membrane. The enzyme catalyses heme b(in) + ATP + H2O = heme b(out) + ADP + phosphate + H(+). In terms of biological role, part of the ABC transporter complex CcmAB involved in the biogenesis of c-type cytochromes; once thought to export heme, this seems not to be the case, but its exact role is uncertain. Responsible for energy coupling to the transport system. This is Cytochrome c biogenesis ATP-binding export protein CcmA from Rhizobium etli (strain ATCC 51251 / DSM 11541 / JCM 21823 / NBRC 15573 / CFN 42).